Here is an 800-residue protein sequence, read N- to C-terminus: Nuclear poly(A) polymerase 2 (800 aa).

ATP contacts are provided by residues 103-105 (FGS), 115-118 (ADID), D171, K232, Y241, and 250-251 (GV). The Mg(2+) site is built by D116, D118, and D171. Short sequence motifs (nuclear localization signal) lie at residues 487-494 (RRRQLPSF) and 533-540 (KRKNDDEI). The interval 497–576 (PNGYKRSRQS…SGITTSGTPQ (80 aa)) is disordered. The span at 527–538 (SVERYAKRKNDD) shows a compositional bias: basic and acidic residues. Over residues 564–575 (PDSSGITTSGTP) the composition is skewed to polar residues.

The protein belongs to the poly(A) polymerase family. Monomer. Forms a complex with cleavage and polyadenylation specificity factor (CPSF) subunits CPSF100, CPSF30, FIPS5 and PABN2. Requires Mg(2+) as cofactor. The cofactor is Mn(2+). As to expression, mostly expressed in flowers (highly in the style, receptacle and pedicel, but weakly in the vasculature of sepals) and hypocotyls, and, to a lower extent, in roots and stems. Barely detected in leaves (petioles and vascular system).

The protein resides in the nucleus. It localises to the cytoplasm. The enzyme catalyses RNA(n) + ATP = RNA(n)-3'-adenine ribonucleotide + diphosphate. Essential protein. Polymerase that creates the 3'-poly(A) tail of mRNA's. Also required for the endoribonucleolytic cleavage reaction at some polyadenylation sites. May acquire specificity through interaction with a cleavage and polyadenylation specificity factor (CPSF) at its C-terminus. Mediates the polyadenylation of RNAs that are associated with polynucleotide phosphorylase (e.g. PNP1). The sequence is that of Nuclear poly(A) polymerase 2 from Arabidopsis thaliana (Mouse-ear cress).